A 289-amino-acid chain; its full sequence is Polyketide biosynthesis malonyl CoA-acyl carrier protein transacylase BaeC (289 aa).

Active-site residues include S87 and H193.

The protein belongs to the FabD family.

The protein localises to the cytoplasm. It carries out the reaction holo-[ACP] + malonyl-CoA = malonyl-[ACP] + CoA. It functions in the pathway antibiotic biosynthesis; bacillaene biosynthesis. In terms of biological role, involved in some intermediate steps for the synthesis of the antibiotic polyketide bacillaene which is involved in secondary metabolism. It catalyzes the transfer of the malonyl-CoA group to the acyl-carrier-protein AcpK (Mal-AcpK). The chain is Polyketide biosynthesis malonyl CoA-acyl carrier protein transacylase BaeC (baeC) from Bacillus velezensis (strain DSM 23117 / BGSC 10A6 / LMG 26770 / FZB42) (Bacillus amyloliquefaciens subsp. plantarum).